Reading from the N-terminus, the 226-residue chain is Thioredoxin domain-containing protein 9 (226 aa).

Positions 52–180 (LEALKKAQQQ…TTETLEWRLG (129 aa)) constitute a Thioredoxin domain. Ser188, Ser221, and Ser223 each carry phosphoserine.

Forms ternary complexes with the chaperonin TCP1 complex, spanning the cylindrical chaperonin cavity and contacting at least 2 subunits.

The protein localises to the cytoplasm. It localises to the nucleus. Its subcellular location is the cytoskeleton. The protein resides in the microtubule organizing center. It is found in the centrosome. The protein localises to the midbody. Functionally, significantly diminishes the chaperonin TCP1 complex ATPase activity, thus negatively impacts protein folding, including that of actin or tubulin. The chain is Thioredoxin domain-containing protein 9 (TXNDC9) from Bos taurus (Bovine).